The chain runs to 197 residues: Allatostatins (197 aa).

Positions 1–27 (MRSRTSVLTSSLAFLYFFGIVGRSALA) are cleaved as a signal peptide. Residues 28–56 (MEETPASSMNLQHYNNMLNPMVFDDTMPE) constitute a propeptide that is removed on maturation. I76 bears the Isoleucine amide mark. Positions 80-86 (WIDTNDN) are excised as a propeptide. L96, L106, L154, and L184 each carry leucine amide. Positions 161 to 197 (YSGGQPLGSKRPNDMLSQRYHFGLGKRMSEDEEESSQ) are disordered. Residues 188–197 (MSEDEEESSQ) constitute a propeptide that is removed on maturation.

Belongs to the allatostatin family.

It is found in the secreted. In terms of biological role, neuropeptides. This Apis mellifera (Honeybee) protein is Allatostatins.